Consider the following 127-residue polypeptide: Thioredoxin (127 aa).

Residues 2–115 (SDGVKHINSA…LRAAAEKMGR (114 aa)) form the Thioredoxin domain. Catalysis depends on nucleophile residues cysteine 33 and cysteine 36. Cysteine 33 and cysteine 36 are disulfide-bonded.

The protein belongs to the thioredoxin family.

In terms of biological role, participates in various redox reactions through the reversible oxidation of its active center dithiol to a disulfide and catalyzes dithiol-disulfide exchange reactions. The sequence is that of Thioredoxin (trx) from Neurospora crassa (strain ATCC 24698 / 74-OR23-1A / CBS 708.71 / DSM 1257 / FGSC 987).